Reading from the N-terminus, the 167-residue chain is Phosphopantetheine adenylyltransferase (167 aa).

T9 contributes to the substrate binding site. Residues 9–10 (TF) and H17 each bind ATP. The substrate site is built by K41, L73, and R87. ATP-binding positions include 88-90 (GLR), E98, and 123-129 (NSYISST).

Belongs to the bacterial CoaD family. Homohexamer. Mg(2+) is required as a cofactor.

It localises to the cytoplasm. It catalyses the reaction (R)-4'-phosphopantetheine + ATP + H(+) = 3'-dephospho-CoA + diphosphate. It functions in the pathway cofactor biosynthesis; coenzyme A biosynthesis; CoA from (R)-pantothenate: step 4/5. Reversibly transfers an adenylyl group from ATP to 4'-phosphopantetheine, yielding dephospho-CoA (dPCoA) and pyrophosphate. This chain is Phosphopantetheine adenylyltransferase, found in Chromohalobacter salexigens (strain ATCC BAA-138 / DSM 3043 / CIP 106854 / NCIMB 13768 / 1H11).